Here is a 35-residue protein sequence, read N- to C-terminus: Photosystem II reaction center protein T (35 aa).

A helical transmembrane segment spans residues 3–23; sequence ALVYTFLLVSTLGIIFFAIFF.

It belongs to the PsbT family. PSII is composed of 1 copy each of membrane proteins PsbA, PsbB, PsbC, PsbD, PsbE, PsbF, PsbH, PsbI, PsbJ, PsbK, PsbL, PsbM, PsbT, PsbY, PsbZ, Psb30/Ycf12, at least 3 peripheral proteins of the oxygen-evolving complex and a large number of cofactors. It forms dimeric complexes.

The protein resides in the plastid. It is found in the chloroplast thylakoid membrane. Its function is as follows. Found at the monomer-monomer interface of the photosystem II (PS II) dimer, plays a role in assembly and dimerization of PSII. PSII is a light-driven water plastoquinone oxidoreductase, using light energy to abstract electrons from H(2)O, generating a proton gradient subsequently used for ATP formation. In Stewartia pseudocamellia (Japanese stewartia), this protein is Photosystem II reaction center protein T.